Here is a 142-residue protein sequence, read N- to C-terminus: Large ribosomal subunit protein uL11 (142 aa).

This sequence belongs to the universal ribosomal protein uL11 family. In terms of assembly, part of the ribosomal stalk of the 50S ribosomal subunit. Interacts with L10 and the large rRNA to form the base of the stalk. L10 forms an elongated spine to which L12 dimers bind in a sequential fashion forming a multimeric L10(L12)X complex. In terms of processing, one or more lysine residues are methylated.

Its function is as follows. Forms part of the ribosomal stalk which helps the ribosome interact with GTP-bound translation factors. The polypeptide is Large ribosomal subunit protein uL11 (Citrobacter koseri (strain ATCC BAA-895 / CDC 4225-83 / SGSC4696)).